The sequence spans 115 residues: Meiotically up-regulated gene 42 protein (115 aa).

Has a role in meiosis. The polypeptide is Meiotically up-regulated gene 42 protein (mug42) (Schizosaccharomyces pombe (strain 972 / ATCC 24843) (Fission yeast)).